A 520-amino-acid chain; its full sequence is Bifunctional purine biosynthesis protein PurH (520 aa).

The MGS-like domain occupies 1–146 (MAPVALLSVS…KNHADVAVLT (146 aa)).

The protein belongs to the PurH family.

It carries out the reaction (6R)-10-formyltetrahydrofolate + 5-amino-1-(5-phospho-beta-D-ribosyl)imidazole-4-carboxamide = 5-formamido-1-(5-phospho-D-ribosyl)imidazole-4-carboxamide + (6S)-5,6,7,8-tetrahydrofolate. The enzyme catalyses IMP + H2O = 5-formamido-1-(5-phospho-D-ribosyl)imidazole-4-carboxamide. It participates in purine metabolism; IMP biosynthesis via de novo pathway; 5-formamido-1-(5-phospho-D-ribosyl)imidazole-4-carboxamide from 5-amino-1-(5-phospho-D-ribosyl)imidazole-4-carboxamide (10-formyl THF route): step 1/1. Its pathway is purine metabolism; IMP biosynthesis via de novo pathway; IMP from 5-formamido-1-(5-phospho-D-ribosyl)imidazole-4-carboxamide: step 1/1. This chain is Bifunctional purine biosynthesis protein PurH, found in Synechococcus sp. (strain CC9902).